The following is a 232-amino-acid chain: N-(5'-phosphoribosyl)anthranilate isomerase (232 aa).

It belongs to the TrpF family.

The enzyme catalyses N-(5-phospho-beta-D-ribosyl)anthranilate = 1-(2-carboxyphenylamino)-1-deoxy-D-ribulose 5-phosphate. It functions in the pathway amino-acid biosynthesis; L-tryptophan biosynthesis; L-tryptophan from chorismate: step 3/5. The polypeptide is N-(5'-phosphoribosyl)anthranilate isomerase (TRP1) (Lipomyces starkeyi (Oleaginous yeast)).